An 85-amino-acid polypeptide reads, in one-letter code: Probable Thioredoxin (85 aa).

The Glutaredoxin domain maps to 2–85 (VVKIEVFTSP…LFEAISDEIE (84 aa)). Cys13 and Cys16 are disulfide-bonded.

Belongs to the glutaredoxin family.

It localises to the cytoplasm. Its function is as follows. Does not function as a glutathione-disulfide oxidoreductase in the presence of glutathione and glutathione reductase. May be a component of a ribonucleotide-reducing system distinct from the previously described systems utilizing thioredoxin or glutaredoxin. The chain is Probable Thioredoxin from Methanothermobacter marburgensis (strain ATCC BAA-927 / DSM 2133 / JCM 14651 / NBRC 100331 / OCM 82 / Marburg) (Methanobacterium thermoautotrophicum).